The primary structure comprises 587 residues: Protein SIX6OS1 (587 aa).

A disordered region spans residues 356-378 (TPQKQSNSNQWSEKGDKDAEYGD). A compositionally biased stretch (polar residues) spans 357-367 (PQKQSNSNQWS). Basic and acidic residues predominate over residues 368–378 (EKGDKDAEYGD). Serine 439 bears the Phosphoserine mark. Residues 568–587 (SSSLKGFSSSSQNTTQFTFF) form a disordered region.

As to quaternary structure, interacts with SYCE1. Interacts with proteasome subunit PSMA8; to participate in meiosis progression during spermatogenesis. As to expression, highest expression in retina, skeletal muscle, testis and colon.

It is found in the chromosome. In terms of biological role, meiotic protein that localizes to the central element of the synaptonemal complex and is required for chromosome synapsis during meiotic recombination. Required for the appropriate processing of intermediate recombination nodules before crossover formation. This chain is Protein SIX6OS1, found in Homo sapiens (Human).